The chain runs to 415 residues: Corticotropin-releasing factor receptor 1 (415 aa).

An N-terminal signal peptide occupies residues M1–T24. The Extracellular segment spans residues S25–K111. Disulfide bonds link C30–C54, C44–C87, and C68–C102. 4 N-linked (GlcNAc...) asparagine glycosylation sites follow: N38, N45, N78, and N90. The chain crosses the membrane as a helical span at residues T112 to L142. The Cytoplasmic portion of the chain corresponds to R143–C149. Residues L150 to L174 traverse the membrane as a helical segment. At T175 to R189 the chain is on the extracellular side. A disulfide bond links C188 and C258. The helical transmembrane segment at L190–V218 threads the bilayer. The Cytoplasmic segment spans residues L219 to K225. Residues L226–Y253 traverse the membrane as a helical segment. At D254 to D269 the chain is on the extracellular side. A helical membrane pass occupies residues F270–M295. Residues T296 to T306 are Cytoplasmic-facing. The chain crosses the membrane as a helical span at residues I307 to F331. Topologically, residues V332–E338 are extracellular. The helical transmembrane segment at I339–S368 threads the bilayer. Over E369–I415 the chain is Cytoplasmic.

Belongs to the G-protein coupled receptor 2 family. As to quaternary structure, interacts (via N-terminal extracellular domain) with CRF and UCN.

The protein resides in the cell membrane. In terms of biological role, G-protein coupled receptor for CRH (corticotropin-releasing factor) and UCN (urocortin). Has high affinity for CRH and UCN. Ligand binding causes a conformation change that triggers signaling via guanine nucleotide-binding proteins (G proteins) and down-stream effectors, such as adenylate cyclase. Promotes the activation of adenylate cyclase, leading to increased intracellular cAMP levels. The protein is Corticotropin-releasing factor receptor 1 (crhr1) of Xenopus laevis (African clawed frog).